A 544-amino-acid polypeptide reads, in one-letter code: Chaperonin GroEL 2 (544 aa).

ATP contacts are provided by residues 29 to 32 (TLGP), 86 to 90 (DGTTT), Gly413, 479 to 481 (NAA), and Asp495.

This sequence belongs to the chaperonin (HSP60) family. As to quaternary structure, forms a cylinder of 14 subunits composed of two heptameric rings stacked back-to-back. Interacts with the co-chaperonin GroES.

The protein localises to the cytoplasm. It catalyses the reaction ATP + H2O + a folded polypeptide = ADP + phosphate + an unfolded polypeptide.. Its function is as follows. Together with its co-chaperonin GroES, plays an essential role in assisting protein folding. The GroEL-GroES system forms a nano-cage that allows encapsulation of the non-native substrate proteins and provides a physical environment optimized to promote and accelerate protein folding. This is Chaperonin GroEL 2 from Synechococcus sp. (strain CC9605).